We begin with the raw amino-acid sequence, 221 residues long: Oxaloacetate tautomerase FAHD1, mitochondrial (221 aa).

A mitochondrion-targeting transit peptide spans 1-24 (MASTKPLSRFWEWGKNIVCVGRNY). Ser-37 bears the Phosphoserine mark. Mg(2+)-binding residues include Glu-68, Glu-70, and Asp-99. Lys-110 is modified (N6-acetyllysine). Residue Lys-112 is modified to N6-succinyllysine.

This sequence belongs to the FAH family. In terms of assembly, homodimer. Requires Mg(2+) as cofactor. Mn(2+) is required as a cofactor.

It localises to the mitochondrion. It is found in the cytoplasm. The protein resides in the cytosol. The catalysed reaction is oxaloacetate = enol-oxaloacetate. It carries out the reaction oxaloacetate + H(+) = pyruvate + CO2. The enzyme catalyses a 3-acylpyruvate + H2O = a carboxylate + pyruvate + H(+). It catalyses the reaction acetylpyruvate + H2O = acetate + pyruvate + H(+). The catalysed reaction is 3-fumarylpyruvate + H2O = fumarate + pyruvate + H(+). Its activity is regulated as follows. Oxaloacetate decarboxylation is competitively inhibited by oxalate. Its function is as follows. Tautomerase that converts enol-oxaloacetate, a strong inhibitor of succinate dehydrogenase, to the physiological keto form of oxaloacetate. It is thereby required to maximize aerobic respiration efficiency by preventing succinate dehydrogenase inhibition. Also acts as a weak oxaloacetate decarboxylase (ODx), catalyzing the decarboxylation of oxaloacetate (OAA) to pyruvate and CO(2), and as such is likely a regulatory enzyme in the TCA cycle. Also displays acylpyruvase activity, being able to hydrolyze acetylpyruvate and fumarylpyruvate in vitro. The protein is Oxaloacetate tautomerase FAHD1, mitochondrial of Rattus norvegicus (Rat).